The chain runs to 287 residues: Putative daunorubicin C-13 ketoreductase DnrU (287 aa).

Position 24 to 30 (24 to 30 (GATSGIG)) interacts with NADP(+). Ser149 is a substrate binding site. Tyr175 (proton acceptor) is an active-site residue.

This sequence belongs to the short-chain dehydrogenases/reductases (SDR) family.

In terms of biological role, could reduce the 13-carbonyl of daunorubicin to produce (13S)-13-dihydrodaunorubicin. Could also be able to reduce the 13-carbonyl of doxorubicin. This is Putative daunorubicin C-13 ketoreductase DnrU from Streptomyces sp. (strain C5).